Reading from the N-terminus, the 256-residue chain is PHD finger protein ALFIN-LIKE 6 (256 aa).

The interval S144 to G200 is disordered. Positions D146–S163 are enriched in low complexity. Residues E182–Q199 show a composition bias toward acidic residues. The PHD-type zinc-finger motif lies at G200–K252.

This sequence belongs to the Alfin family. Interacts with H3K4me3 and to a lesser extent with H3K4me2. As to expression, ubiquitously expressed.

The protein localises to the nucleus. Histone-binding component that specifically recognizes H3 tails trimethylated on 'Lys-4' (H3K4me3), which mark transcription start sites of virtually all active genes. This chain is PHD finger protein ALFIN-LIKE 6 (AL6), found in Arabidopsis thaliana (Mouse-ear cress).